The following is a 325-amino-acid chain: Protein FAM50B (325 aa).

Position 2 is an N-acetylalanine (A2). Positions 137-160 are disordered; sequence RRAGNLGKNPDVDTSFLPDRDREE.

This sequence belongs to the FAM50 family.

The chain is Protein FAM50B (FAM50B) from Macaca fascicularis (Crab-eating macaque).